The sequence spans 162 residues: Corticoliberin-1 (162 aa).

The signal sequence occupies residues methionine 1–alanine 24. Positions isoleucine 25 to arginine 119 are excised as a propeptide. The residue at position 160 (phenylalanine 160) is a Phenylalanine amide.

This sequence belongs to the sauvagine/corticotropin-releasing factor/urotensin I family.

The protein localises to the secreted. Functionally, this hormone from hypothalamus regulates the release of corticotropin from pituitary gland. In Catostomus commersonii (White sucker), this protein is Corticoliberin-1 (crf1).